We begin with the raw amino-acid sequence, 220 residues long: Deoxyribose-phosphate aldolase 2 (220 aa).

Asp89 acts as the Proton donor/acceptor in catalysis. The active-site Schiff-base intermediate with acetaldehyde is the Lys151. The active-site Proton donor/acceptor is Lys180.

Belongs to the DeoC/FbaB aldolase family. DeoC type 1 subfamily.

The protein resides in the cytoplasm. The catalysed reaction is 2-deoxy-D-ribose 5-phosphate = D-glyceraldehyde 3-phosphate + acetaldehyde. Its pathway is carbohydrate degradation; 2-deoxy-D-ribose 1-phosphate degradation; D-glyceraldehyde 3-phosphate and acetaldehyde from 2-deoxy-alpha-D-ribose 1-phosphate: step 2/2. Functionally, catalyzes a reversible aldol reaction between acetaldehyde and D-glyceraldehyde 3-phosphate to generate 2-deoxy-D-ribose 5-phosphate. The chain is Deoxyribose-phosphate aldolase 2 from Staphylococcus aureus (strain N315).